Here is a 445-residue protein sequence, read N- to C-terminus: Tubulin beta-4B chain (445 aa).

Positions 1-4 match the MREI motif motif; it reads MREI. Q11 serves as a coordination point for GTP. T55 carries the post-translational modification Phosphothreonine. Position 58 is an N6-acetyllysine (K58). Positions 69, 138, 142, 143, and 144 each coordinate GTP. E69 provides a ligand contact to Mg(2+). S172 carries the phosphoserine; by CDK1 modification. Positions 204 and 226 each coordinate GTP. Residues 426–445 are disordered; sequence QDATAEEEGEFEEEAEEEVA. Positions 429–445 are enriched in acidic residues; it reads TAEEEGEFEEEAEEEVA. E438 is modified (5-glutamyl polyglutamate).

The protein belongs to the tubulin family. In terms of assembly, dimer of alpha and beta chains. A typical microtubule is a hollow water-filled tube with an outer diameter of 25 nm and an inner diameter of 15 nM. Alpha-beta heterodimers associate head-to-tail to form protofilaments running lengthwise along the microtubule wall with the beta-tubulin subunit facing the microtubule plus end conferring a structural polarity. Microtubules usually have 13 protofilaments but different protofilament numbers can be found in some organisms and specialized cells. Component of sperm flagellar doublet microtubules. It depends on Mg(2+) as a cofactor. In terms of processing, some glutamate residues at the C-terminus are polyglycylated, resulting in polyglycine chains on the gamma-carboxyl group. Glycylation is mainly limited to tubulin incorporated into axonemes (cilia and flagella) whereas glutamylation is prevalent in neuronal cells, centrioles, axonemes, and the mitotic spindle. Both modifications can coexist on the same protein on adjacent residues, and lowering polyglycylation levels increases polyglutamylation, and reciprocally. Cilia and flagella glycylation is required for their stability and maintenance. Flagella glycylation controls sperm motility. Some glutamate residues at the C-terminus are polyglutamylated, resulting in polyglutamate chains on the gamma-carboxyl group. Polyglutamylation plays a key role in microtubule severing by spastin (SPAST). SPAST preferentially recognizes and acts on microtubules decorated with short polyglutamate tails: severing activity by SPAST increases as the number of glutamates per tubulin rises from one to eight, but decreases beyond this glutamylation threshold. Glutamylation is also involved in cilia motility. Post-translationally, phosphorylated on Ser-172 by CDK1 during the cell cycle, from metaphase to telophase, but not in interphase. This phosphorylation inhibits tubulin incorporation into microtubules.

It is found in the cytoplasm. Its subcellular location is the cytoskeleton. It localises to the flagellum axoneme. Tubulin is the major constituent of microtubules, a cylinder consisting of laterally associated linear protofilaments composed of alpha- and beta-tubulin heterodimers. Microtubules grow by the addition of GTP-tubulin dimers to the microtubule end, where a stabilizing cap forms. Below the cap, tubulin dimers are in GDP-bound state, owing to GTPase activity of alpha-tubulin. This is Tubulin beta-4B chain (Tubb4b) from Rattus norvegicus (Rat).